The sequence spans 117 residues: Immunoglobulin heavy variable 1-69D (117 aa).

Positions 1-19 (MDWTWRFLFVVAAATGVQS) are cleaved as a signal peptide. Gln20 is modified (pyrrolidone carboxylic acid). Positions 20–44 (QVQLVQSGAEVKKPGSSVKVSCKAS) are framework-1. Residues 20-117 (QVQLVQSGAE…EDTAVYYCAR (98 aa)) enclose the Ig-like domain. Residues Cys41 and Cys115 are joined by a disulfide bond. Residues 45–52 (GGTFSSYA) are complementarity-determining-1. A framework-2 region spans residues 53–69 (ISWVRQAPGQGLEWMGG). The interval 70-77 (IIPIFGTA) is complementarity-determining-2. Residues 78 to 115 (NYAQKFQGRVTITADESTSTAYMELSSLRSEDTAVYYC) are framework-3. A complementarity-determining-3 region spans residues 116–117 (AR).

As to quaternary structure, immunoglobulins are composed of two identical heavy chains and two identical light chains; disulfide-linked.

It is found in the secreted. It localises to the cell membrane. In terms of biological role, v region of the variable domain of immunoglobulin heavy chains that participates in the antigen recognition. Immunoglobulins, also known as antibodies, are membrane-bound or secreted glycoproteins produced by B lymphocytes. In the recognition phase of humoral immunity, the membrane-bound immunoglobulins serve as receptors which, upon binding of a specific antigen, trigger the clonal expansion and differentiation of B lymphocytes into immunoglobulins-secreting plasma cells. Secreted immunoglobulins mediate the effector phase of humoral immunity, which results in the elimination of bound antigens. The antigen binding site is formed by the variable domain of one heavy chain, together with that of its associated light chain. Thus, each immunoglobulin has two antigen binding sites with remarkable affinity for a particular antigen. The variable domains are assembled by a process called V-(D)-J rearrangement and can then be subjected to somatic hypermutations which, after exposure to antigen and selection, allow affinity maturation for a particular antigen. The sequence is that of Immunoglobulin heavy variable 1-69D from Homo sapiens (Human).